The following is a 145-amino-acid chain: Large ribosomal subunit protein uL11 (145 aa).

It belongs to the universal ribosomal protein uL11 family. Part of the ribosomal stalk of the 50S ribosomal subunit. Interacts with L10 and the large rRNA to form the base of the stalk. L10 forms an elongated spine to which L12 dimers bind in a sequential fashion forming a multimeric L10(L12)X complex. Post-translationally, one or more lysine residues are methylated.

Forms part of the ribosomal stalk which helps the ribosome interact with GTP-bound translation factors. This is Large ribosomal subunit protein uL11 from Flavobacterium johnsoniae (strain ATCC 17061 / DSM 2064 / JCM 8514 / BCRC 14874 / CCUG 350202 / NBRC 14942 / NCIMB 11054 / UW101) (Cytophaga johnsonae).